The following is a 366-amino-acid chain: Spermidine/putrescine import ATP-binding protein PotA (366 aa).

One can recognise an ABC transporter domain in the interval 8–239; sequence IRFENVTKQF…PINKFVADFI (232 aa). 41–48 provides a ligand contact to ATP; it reads GPSGCGKT.

This sequence belongs to the ABC transporter superfamily. Spermidine/putrescine importer (TC 3.A.1.11.1) family. As to quaternary structure, the complex is composed of two ATP-binding proteins (PotA), two transmembrane proteins (PotB and PotC) and a solute-binding protein (PotD).

It localises to the cell membrane. The catalysed reaction is ATP + H2O + polyamine-[polyamine-binding protein]Side 1 = ADP + phosphate + polyamineSide 2 + [polyamine-binding protein]Side 1.. Functionally, part of the ABC transporter complex PotABCD involved in spermidine/putrescine import. Responsible for energy coupling to the transport system. This is Spermidine/putrescine import ATP-binding protein PotA from Listeria monocytogenes serotype 4b (strain F2365).